Consider the following 246-residue polypeptide: Bromelain inhibitor (246 aa).

The signal sequence occupies residues 1 to 19 (MNMLLLFLHEVINGERVTL). 5 disulfides stabilise this stretch: C22–C42, C25–C74, C27–C40, C49–C56, and C53–C65. Positions 31–35 (TSSSD) are excised as a propeptide. Propeptides lie at residues 77-95 (PVSSSEAKQKMIKGERVTL) and 107-111 (TSSSD). Cystine bridges form between C98-C118, C101-C150, C103-C116, C125-C132, and C129-C141. 2 propeptides span residues 153 to 171 (PVSSLEAKQNMIKEERVTL) and 183 to 187 (TSSSD). Cystine bridges form between C174-C194, C177-C226, C179-C192, C201-C208, and C205-C217. Positions 229–246 (PVSSWEARQKIKLLQGRE) are excised as a propeptide.

The protein belongs to the protease inhibitor I67 family. Each inhibitor is composed of two chains, designated A and B linked by three disulfide bonds.

Weak inhibitor of cysteine proteinases. This is Bromelain inhibitor from Ananas comosus (Pineapple).